We begin with the raw amino-acid sequence, 340 residues long: Eukaryotic translation initiation factor 3 subunit I (340 aa).

WD repeat units lie at residues 8–47 (GHERSLNQIKFNRDGDLLFSVAKDKIVCAWWSANGERLGT), 50–91 (GHQG…KVWD), 150–189 (CTESKATVAGWSYLGKYIIAGHEDGSVSQYDGKTGEQLEN), 194–233 (EFDHQINDIQFSQDRTYFITASKDKSAKLISSRNLAILKT), and 291–330 (GHFGPLNTVDVHPNGTAYASGGEDGYVRVHHFDKPYFDFM).

The protein belongs to the eIF-3 subunit I family. As to quaternary structure, component of the eukaryotic translation initiation factor 3 (eIF-3) complex.

The protein resides in the cytoplasm. Functionally, component of the eukaryotic translation initiation factor 3 (eIF-3) complex, which is involved in protein synthesis of a specialized repertoire of mRNAs and, together with other initiation factors, stimulates binding of mRNA and methionyl-tRNAi to the 40S ribosome. The eIF-3 complex specifically targets and initiates translation of a subset of mRNAs involved in cell proliferation. This is Eukaryotic translation initiation factor 3 subunit I (tif34) from Neosartorya fischeri (strain ATCC 1020 / DSM 3700 / CBS 544.65 / FGSC A1164 / JCM 1740 / NRRL 181 / WB 181) (Aspergillus fischerianus).